Here is a 186-residue protein sequence, read N- to C-terminus: Small ribosomal subunit protein uS7 (186 aa).

It belongs to the universal ribosomal protein uS7 family. In terms of assembly, part of the 30S ribosomal subunit.

Functionally, one of the primary rRNA binding proteins, it binds directly to 16S rRNA where it nucleates assembly of the head domain of the 30S subunit. Is located at the subunit interface close to the decoding center. The sequence is that of Small ribosomal subunit protein uS7 from Methanococcoides burtonii (strain DSM 6242 / NBRC 107633 / OCM 468 / ACE-M).